We begin with the raw amino-acid sequence, 445 residues long: Phosphoglucosamine mutase (445 aa).

The active-site Phosphoserine intermediate is serine 102. Positions 102, 241, 243, and 245 each coordinate Mg(2+). A Phosphoserine modification is found at serine 102.

This sequence belongs to the phosphohexose mutase family. Mg(2+) serves as cofactor. Post-translationally, activated by phosphorylation.

It catalyses the reaction alpha-D-glucosamine 1-phosphate = D-glucosamine 6-phosphate. In terms of biological role, catalyzes the conversion of glucosamine-6-phosphate to glucosamine-1-phosphate. The sequence is that of Phosphoglucosamine mutase from Variovorax paradoxus (strain S110).